The following is a 76-amino-acid chain: uncharacterized protein (76 aa).

To M.jannaschii MJ0857 N-terminal region.

This is an uncharacterized protein from Methanocaldococcus jannaschii (strain ATCC 43067 / DSM 2661 / JAL-1 / JCM 10045 / NBRC 100440) (Methanococcus jannaschii).